Here is a 366-residue protein sequence, read N- to C-terminus: ADP-ribosylarginine hydrolase Tri1 (366 aa).

The segment at 1-65 is N-terminal extension; sequence MIDLREDTWT…LNTPPCLIPE (65 aa). The ADP-ribosyl hydrolase domain stretch occupies residues 74-366; the sequence is GALVGLAIGD…LFYMAPEEDF (293 aa). Residues T116, D117, D118, D161, and D317 each coordinate Mg(2+).

This sequence belongs to the ADP-ribosylglycohydrolase family. As to quaternary structure, forms a stable complex with cognate effector protein Tre1-Sp. Mg(2+) is required as a cofactor.

It carries out the reaction N(omega)-(ADP-D-ribosyl)-L-arginyl-[protein] + H2O = ADP-D-ribose + L-arginyl-[protein]. Its function is as follows. Immunity component of a contact-dependent interbacterial competition system (also called effector-immunity systems). Acts as an arginine mono-ADP-ribosylhydrolase, mediating the removal of mono-ADP-ribose attached to arginine residues on proteins. De-ADP-ribosylates FtsZ, is able to act on other proteins as well. Neutralizes the toxic activity of cognate toxin Tre1-Sp. Expression of this protein alone in E.coli partially protects the cells against competition by wild-type S.proteamaculans. Neutralizes Tre1-Sp both by occluding its active site via its N-terminal extension and by hydrolyzing the ADP-ribosyl moiety from FtsZ; the 2 activities are dissociable by mutagenesis. This is ADP-ribosylarginine hydrolase Tri1 from Serratia proteamaculans (strain 568).